The sequence spans 705 residues: Variediene synthase (705 aa).

The segment at 9 to 331 (LNSTLSSVVE…RCPRYHPWLC (323 aa)) is terpene cyclase. Mg(2+) is bound at residue D100. Substrate is bound by residues D100, 186–189 (RIID), N230, 234–238 (SFDIE), and 325–326 (RY). The DDXXD 1 signature appears at 100–104 (DNVVE). The short motif at 230-238 (NDYFSFDIE) is the NSE/DTE element. The tract at residues 332–705 (KEAASLLHQD…VRLLIHRLKV (374 aa)) is prenyltransferase. Basic and acidic residues predominate over residues 349-366 (GRKPQALEEYRSRSHSES). The tract at residues 349–374 (GRKPQALEEYRSRSHSESDLSDASPT) is disordered. Isopentenyl diphosphate contacts are provided by K424, R427, and H456. Mg(2+)-binding residues include D463 and D467. The DDXXD 2 motif lies at 463 to 467 (DDIED). R472 serves as a coordination point for dimethylallyl diphosphate. R473 serves as a coordination point for isopentenyl diphosphate. K550, T551, Q589, N596, K605, and K615 together coordinate dimethylallyl diphosphate.

The protein in the N-terminal section; belongs to the terpene synthase family. In the C-terminal section; belongs to the FPP/GGPP synthase family. Hexamer. It depends on Mg(2+) as a cofactor.

The catalysed reaction is isopentenyl diphosphate + (2E,6E)-farnesyl diphosphate = (2E,6E,10E)-geranylgeranyl diphosphate + diphosphate. It catalyses the reaction isopentenyl diphosphate + (2E,6E,10E)-geranylgeranyl diphosphate = (2E,6E,10E,14E)-geranylfarnesyl diphosphate + diphosphate. It carries out the reaction (2E,6E,10E)-geranylgeranyl diphosphate = variediene + diphosphate. The enzyme catalyses (2E,6E,10E,14E)-geranylfarnesyl diphosphate = (R,2E)-alpha-cericerene + diphosphate. It functions in the pathway secondary metabolite biosynthesis; terpenoid biosynthesis. Bifunctional terpene synthase that converts dimethylallyl diphosphate (DMAPP) and isopentenyl diphosphate (IPP) into variediene as a single product. The C-terminal prenyltransferase (PT) domain of EvVS catalyzes formation of geranylgeranyl pyrophosphate (GGPP), whereas the N-terminal terpene cyclase (TC) domain catalyzes the cyclization of GGPP to variediene. The PT domain can also synthesize geranylfarnesyl pyrophosphate (GFPP) from the C5 isoprene units in vitro, while the TC domain is able to cyclize GFPP to the sesterterpene (2E)-alpha-cericerene. This is Variediene synthase from Emericella variicolor (Aspergillus stellatus).